The chain runs to 70 residues: Small ribosomal subunit protein bS18 (70 aa).

It belongs to the bacterial ribosomal protein bS18 family. In terms of assembly, part of the 30S ribosomal subunit. Forms a tight heterodimer with protein bS6.

In terms of biological role, binds as a heterodimer with protein bS6 to the central domain of the 16S rRNA, where it helps stabilize the platform of the 30S subunit. This chain is Small ribosomal subunit protein bS18, found in Salinibacter ruber (strain DSM 13855 / M31).